A 172-amino-acid polypeptide reads, in one-letter code: RNA silencing suppressor p19 (172 aa).

Residues 1 to 20 (MERAIQGNDTREQANGERWD) are compositionally biased toward basic and acidic residues. The segment at 1-27 (MERAIQGNDTREQANGERWDGGSGGIT) is disordered.

It belongs to the tombusvirus protein p19 family. Homodimer.

Acts as a suppressor of RNA-mediated gene silencing, also known as post-transcriptional gene silencing (PTGS), a mechanism of plant viral defense that limits the accumulation of viral RNAs. Binds to short interfering RNAs (siRNAs) with high affinity. Acts as a molecular caliper to specifically select siRNAs based on the length of the duplex region of the RNA. The protein is RNA silencing suppressor p19 of Dianthus caryophyllus (Carnation).